The chain runs to 273 residues: Proteasome subunit beta type-10 (273 aa).

Position 1 is an N-acetylmethionine (Met1). Positions 1 to 39 are cleaved as a propeptide — removed in mature form; the sequence is MLKQAVEHRGGFSFENCQRNASLEHVLPGLRVPLARKTG. Thr40 serves as the catalytic Nucleophile. A Phosphoserine modification is found at Ser230.

Belongs to the peptidase T1B family. The 26S proteasome consists of a 20S proteasome core and two 19S regulatory subunits. The 20S proteasome core is composed of 28 subunits that are arranged in four stacked rings, resulting in a barrel-shaped structure. The two end rings are each formed by seven alpha subunits, and the two central rings are each formed by seven beta subunits. The catalytic chamber with the active sites is on the inside of the barrel. Component of the immunoproteasome, where it displaces the equivalent housekeeping subunit PSMB7. Component of the spermatoproteasome, a form of the proteasome specifically found in testis. Autocleaved. The resulting N-terminal Thr residue of the mature subunit is responsible for the nucleophile proteolytic activity.

It is found in the cytoplasm. Its subcellular location is the nucleus. It catalyses the reaction Cleavage of peptide bonds with very broad specificity.. Functionally, the proteasome is a multicatalytic proteinase complex which is characterized by its ability to cleave peptides with Arg, Phe, Tyr, Leu, and Glu adjacent to the leaving group at neutral or slightly basic pH. The proteasome has an ATP-dependent proteolytic activity. This subunit is involved in antigen processing to generate class I binding peptides. This Rattus norvegicus (Rat) protein is Proteasome subunit beta type-10 (Psmb10).